Reading from the N-terminus, the 477-residue chain is MKVTLPEFERAGVMVVGDVMLDRYWYGPTSRISPEAPVPVVKVDTIEERPGGAANVAMNIASLGANSRLVGLTGIDDAARALSKTLADVNVKCDFVSVPTHPTITKLRVLSRNQQLIRLDFEEGFEGVDPLPLHERINQALGSIGALVLSDYAKGALASVQQMIQLARKAGVPVLIDPKGTDFERYRGATLLTPNLSEFEAVAGKCKSEEEIVERGMKLIADFEFSALLVTRSEQGMTLLQPGKAPLHMPTQAQEVYDVTGAGDTVIGVLAATLAAGNSLEEACYFANAAAGVVVGKLGTSTVSPIELENAVRGRADTGFGVMTEAELKQAVASARKRGEKVVMTNGVFDILHAGHVSYLANARKLGDRLIVAVNSDASTKRLKGETRPVNPLEQRMIVLGALESVDWVVSFDEDTPQRLIAGVLPDLLVKGGDYKPEEIAGSEEVWANGGEVLVLNFEDGCSTTNIIKKIQKDSDK.

The interval 1-318 (MKVTLPEFER…ENAVRGRADT (318 aa)) is ribokinase. An ATP-binding site is contributed by 195-198 (NLSE). Asp-264 is an active-site residue. The cytidylyltransferase stretch occupies residues 344–477 (MTNGVFDILH…IKKIQKDSDK (134 aa)).

This sequence in the N-terminal section; belongs to the carbohydrate kinase PfkB family. In the C-terminal section; belongs to the cytidylyltransferase family. In terms of assembly, homodimer.

It catalyses the reaction D-glycero-beta-D-manno-heptose 7-phosphate + ATP = D-glycero-beta-D-manno-heptose 1,7-bisphosphate + ADP + H(+). The enzyme catalyses D-glycero-beta-D-manno-heptose 1-phosphate + ATP + H(+) = ADP-D-glycero-beta-D-manno-heptose + diphosphate. Its pathway is nucleotide-sugar biosynthesis; ADP-L-glycero-beta-D-manno-heptose biosynthesis; ADP-L-glycero-beta-D-manno-heptose from D-glycero-beta-D-manno-heptose 7-phosphate: step 1/4. The protein operates within nucleotide-sugar biosynthesis; ADP-L-glycero-beta-D-manno-heptose biosynthesis; ADP-L-glycero-beta-D-manno-heptose from D-glycero-beta-D-manno-heptose 7-phosphate: step 3/4. Catalyzes the phosphorylation of D-glycero-D-manno-heptose 7-phosphate at the C-1 position to selectively form D-glycero-beta-D-manno-heptose-1,7-bisphosphate. Functionally, catalyzes the ADP transfer from ATP to D-glycero-beta-D-manno-heptose 1-phosphate, yielding ADP-D-glycero-beta-D-manno-heptose. This is Bifunctional protein HldE from Citrobacter koseri (strain ATCC BAA-895 / CDC 4225-83 / SGSC4696).